An 80-amino-acid chain; its full sequence is Protein Vpu (80 aa).

Over 1 to 7 the chain is Extracellular; it reads MLSLQIL. Residues 8-28 form a helical membrane-spanning segment; that stretch reads AIVALVVAAIIAIVVWSIVFI. Residues 29–80 are Cytoplasmic-facing; that stretch reads EYRKILRQRKIDRLIDRIREREEDSGNESEGDQEELAALERGHLAPWDVDDL. A disordered region spans residues 49–80; sequence REEDSGNESEGDQEELAALERGHLAPWDVDDL. 2 positions are modified to phosphoserine; by host CK2: Ser53 and Ser57. A compositionally biased stretch (acidic residues) spans 53 to 65; the sequence is SGNESEGDQEELA.

It belongs to the HIV-1 VPU protein family. As to quaternary structure, homopentamer. Interacts with host CD4 and BRTC; these interactions induce proteasomal degradation of CD4. Interacts with host BST2; this interaction leads to the degradation of host BST2. Interacts with host FBXW11. Interacts with host AP1M1; this interaction plays a role in the mistrafficking and subsequent degradation of host BST2. Interacts with host RANBP2; this interaction allows Vpu to down-regulate host BLM sumoylation. In terms of processing, phosphorylated by host CK2. This phosphorylation is necessary for interaction with human BTRC and degradation of CD4.

It localises to the host membrane. Ion channel activity is inhibited by hexamethylene amiloride in vitro. In terms of biological role, enhances virion budding by targeting host CD4 and Tetherin/BST2 to proteasome degradation. Degradation of CD4 prevents any unwanted premature interactions between viral Env and its host receptor CD4 in the endoplasmic reticulum. Degradation of antiretroviral protein Tetherin/BST2 is important for virion budding, as BST2 tethers new viral particles to the host cell membrane. Mechanistically, Vpu bridges either CD4 or BST2 to BTRC, a substrate recognition subunit of the Skp1/Cullin/F-box protein E3 ubiquitin ligase, induces their ubiquitination and subsequent proteasomal degradation. The alteration of the E3 ligase specificity by Vpu seems to promote the degradation of host IKBKB, leading to NF-kappa-B down-regulation and subsequent apoptosis. Acts as a viroporin that forms an oligomeric ion channel in membranes. Modulates the host DNA repair mechanisms to promote degradation of nuclear viral cDNA in cells that are already productively infected in order to suppress immune sensing and proviral hyper-integration (superinfection). Manipulates PML-NBs and modulates SUMOylation of host BLM protein thereby enhancing its DNA-end processing activity toward viral unintegrated linear DNA. Also inhibits RAD52-mediated homologous repair of viral cDNA, preventing the generation of dead-end circular forms of single copies of the long terminal repeat and permitting sustained nucleolytic attack. The sequence is that of Protein Vpu from Human immunodeficiency virus type 1 group M subtype B (strain 89.6) (HIV-1).